Reading from the N-terminus, the 126-residue chain is uncharacterized protein (126 aa).

The Extracellular portion of the chain corresponds to 1–9 (MCTYIITQS). A helical transmembrane segment spans residues 10–30 (FFFLPCLSFLFFKLVGFFDSV). The Cytoplasmic segment spans residues 31–73 (FTAGKSLRIMFELPIFDKLTSCFAAIDCSATSLDIPFAEEELF). The helical transmembrane segment at 74-94 (LMLVSEPVLIPFLFVFEFMLI) threads the bilayer. Residues 95-126 (CKPCGSRSRFGFPVKNVSDFEETLEFDPTLLV) are Extracellular-facing.

It is found in the membrane. This is an uncharacterized protein from Saccharomyces cerevisiae (strain ATCC 204508 / S288c) (Baker's yeast).